Reading from the N-terminus, the 549-residue chain is Protein wntless homolog (549 aa).

Positions 1-34 (MAGGAVIENLSNRKLFVIFAGLLVIQIMFFLIGA) are cleaved as a signal peptide. Residues 36–236 (YAPSPSSYME…RLIEIHQNGG (201 aa)) are Lumenal-facing. A helical transmembrane segment spans residues 237–257 (FTLVWLWTKTFMTPVVAICLW). Over 258–275 (WYYNRINQLARNPLLLER) the chain is Cytoplasmic. Residues 276–296 (AILLLGLSLVILDFPIEWISL) traverse the membrane as a helical segment. Residues 297–310 (TYRIPFLLLISDLR) lie on the Lumenal side of the membrane. A helical transmembrane segment spans residues 311-331 (QGLFYTVLFSFWLIFAGEHLI). The Cytoplasmic portion of the chain corresponds to 332–345 (DDNTRNNLKSYRFN). A helical transmembrane segment spans residues 346 to 366 (LSFIITASLGLLIYDLIERGI). The Lumenal portion of the chain corresponds to 367–383 (QLYDPFYSVWSSPTGSQ). A helical membrane pass occupies residues 384 to 404 (IAYFAIFISAISTVAYFIFLF). Over 405 to 439 (FKIARVWSTIKSKRSAQIYQTSENRRLKVEGVIYR) the chain is Cytoplasmic. The helical transmembrane segment at 440 to 460 (FKFLMLFTLLCSAFTIAAYFM) threads the bilayer. Residues 461 to 483 (KQYGEAQLHGDEARDGFLTGSTS) lie on the Lumenal side of the membrane. Residues 484–504 (AFFTGAFGMCNIYVLLLLAMY) traverse the membrane as a helical segment. At 505-549 (APSHKHYRGASQLIDENDDDEIMEDPSNQHTESNAMTTFLKPSTD) the chain is on the cytoplasmic side. Positions 524-549 (DEIMEDPSNQHTESNAMTTFLKPSTD) are disordered. Residues 530–549 (PSNQHTESNAMTTFLKPSTD) show a composition bias toward polar residues.

It belongs to the wntless family. Expressed in the tail hypodermis, stomatointestinal muscle, the mesoblast cell M and its descendants, CAN neurons, the developing vulva, the pharynx and the pharyngeal intestinal valve.

Its subcellular location is the cell membrane. It is found in the early endosome membrane. It localises to the golgi apparatus membrane. The protein localises to the basal cell membrane. The protein resides in the late endosome membrane. Its function is as follows. Probable sorting receptor which regulates endocytosis and secretion of the wnt ligand egl-20. Recycling of mig-14 from the plasma membrane to the Golgi apparatus by the retromer complex is essential for its function. Its endosomal trafficking is regulated by its association with sorting nexin snx-3 on early endosomes and the mtm-6/mtm-9 myotubularin complex. Required in embryonic development for endoderm specification and the correct positioning and orientation of the mitotic spindles and division planes in blastomere cells. Functions during vulval development, playing a role in vulval precursor cell fate specification. During development, specifically regulates the migration of HSN neurons, the left Q neuroblast (QL) and its descendants and the distal tip cells of the gonads. Positioning of Q neuroblasts may be both dependent and independent of hox gene mab-5. Involved in establishing ALM and PLM neuronal cell polarity. The polypeptide is Protein wntless homolog (Caenorhabditis elegans).